A 143-amino-acid polypeptide reads, in one-letter code: Large ribosomal subunit protein uL11 (143 aa).

The protein belongs to the universal ribosomal protein uL11 family. Part of the ribosomal stalk of the 50S ribosomal subunit. Interacts with L10 and the large rRNA to form the base of the stalk. L10 forms an elongated spine to which L12 dimers bind in a sequential fashion forming a multimeric L10(L12)X complex. Post-translationally, one or more lysine residues are methylated.

In terms of biological role, forms part of the ribosomal stalk which helps the ribosome interact with GTP-bound translation factors. In Herminiimonas arsenicoxydans, this protein is Large ribosomal subunit protein uL11.